A 119-amino-acid polypeptide reads, in one-letter code: uncharacterized protein (119 aa).

This is an uncharacterized protein from Bos taurus (Bovine).